The primary structure comprises 229 residues: Large ribosomal subunit protein uL1c (229 aa).

It belongs to the universal ribosomal protein uL1 family. Part of the 50S ribosomal subunit.

It localises to the plastid. The protein resides in the chloroplast. Its function is as follows. Binds directly to 23S rRNA. Might be involved in E site tRNA release (Potential). This is Large ribosomal subunit protein uL1c (rpl1) from Porphyra purpurea (Red seaweed).